A 349-amino-acid chain; its full sequence is tRNA pseudouridine synthase D (349 aa).

Phenylalanine 27 provides a ligand contact to substrate. Aspartate 80 functions as the Nucleophile in the catalytic mechanism. Asparagine 129 serves as a coordination point for substrate. Positions 155–303 constitute a TRUD domain; sequence GVPNYFGAQR…VEAARRAMLL (149 aa). A substrate-binding site is contributed by phenylalanine 329.

It belongs to the pseudouridine synthase TruD family.

The enzyme catalyses uridine(13) in tRNA = pseudouridine(13) in tRNA. Responsible for synthesis of pseudouridine from uracil-13 in transfer RNAs. The polypeptide is tRNA pseudouridine synthase D (Escherichia fergusonii (strain ATCC 35469 / DSM 13698 / CCUG 18766 / IAM 14443 / JCM 21226 / LMG 7866 / NBRC 102419 / NCTC 12128 / CDC 0568-73)).